The chain runs to 35 residues: Z-limacoditoxin(1)-Dv1 (35 aa).

Residues 1–22 form the signal peptide; it reads MKKTFLPIFLVILLASYALANP. Pyrrolidone carboxylic acid is present on Gln-23. Pro-32 carries the proline amide modification.

This sequence belongs to the limacoditoxin-1 (ACP-like) family. Expressed by the venom secretory cell of the spine. The spine is a cuticular structure containing a single large nucleated venom-secreting cell at its base. It is an independent unit capable of producing, storing and injecting venom. On the back of D.vulnerans caterpillars, spines are grouped together by 50 to 100 to form scoli, of which there are eight in D.vulnerans.

It localises to the secreted. Its function is as follows. Potently activates insect G protein-coupled receptor. It activates the ACP receptor (ACPR) from the mosquito A.aegypti (EC(50)=0.55 nM) with a potency comparable to that of the endogenous ligand. Has no activity on receptors of the closely related neuropeptides adipokinetic hormone and corazonin. In vivo, does not reveal any observable effects when injected into crickets (A.domesticus). Does not induce increase in intracellular calcium in mouse DRG neurons, suggesting that it does not induce pain. This Doratifera vulnerans (Mottled cup moth) protein is Z-limacoditoxin(1)-Dv1.